Here is a 350-residue protein sequence, read N- to C-terminus: Protein RecA (350 aa).

An ATP-binding site is contributed by 65–72; the sequence is GPESSGKT.

It belongs to the RecA family.

The protein resides in the cytoplasm. In terms of biological role, can catalyze the hydrolysis of ATP in the presence of single-stranded DNA, the ATP-dependent uptake of single-stranded DNA by duplex DNA, and the ATP-dependent hybridization of homologous single-stranded DNAs. It interacts with LexA causing its activation and leading to its autocatalytic cleavage. The sequence is that of Protein RecA from Clostridium tetani (strain Massachusetts / E88).